The following is a 201-amino-acid chain: Akirin-2 (201 aa).

Phosphoserine occurs at positions 18 and 21. A Nuclear localization signal motif is present at residues 22–27 (PKRRRC). Position 55 is a phosphoserine (Ser55). The short motif at 198-201 (SYVS) is the SYVS motif element.

Belongs to the akirin family. As to quaternary structure, homodimer. Interacts with IPO9; the interaction is direct. Associates with 20S and 26S proteasomes. Interacts with SMARCD1; promoting SWI/SNF complex recruitment. Interacts with NFKBIZ. Interacts with YWHAB. Post-translationally, polyubiquitinated. Polyubiquitination is dependent of UBR5 that extends pre-ubiquitinated AKIRIN2. In terms of tissue distribution, highly expressed in testis, cerebrum and cerebellum, and barely detectable in liver, heart, spleen and muscle. Also highly expressed in various tumor cells from hepatoma, glioblastoma and pheochromocytoma.

It is found in the nucleus. The protein localises to the cytoplasm. It localises to the membrane. Molecular adapter that acts as a bridge between a variety of multiprotein complexes, and which is involved in embryonic development, immunity, myogenesis and brain development. Plays a key role in nuclear protein degradation by promoting import of proteasomes into the nucleus: directly binds to fully assembled 20S proteasomes at one end and to nuclear import receptor IPO9 at the other end, bridging them together and mediating the import of pre-assembled proteasome complexes through the nuclear pore. Involved in innate immunity by regulating the production of interleukin-6 (IL6) downstream of Toll-like receptor (TLR): acts by bridging the NF-kappa-B inhibitor NFKBIZ and the SWI/SNF complex, leading to promote induction of IL6. Also involved in adaptive immunity by promoting B-cell activation. Involved in brain development: required for the survival and proliferation of cerebral cortical progenitor cells. Involved in myogenesis: required for skeletal muscle formation and skeletal development, possibly by regulating expression of muscle differentiation factors. Also plays a role in facilitating interdigital tissue regression during limb development. The chain is Akirin-2 from Rattus norvegicus (Rat).